The chain runs to 355 residues: MFTLSDFDFNLPPELIAQTALPDRTASRLLEVDRSVEPARLVDRHFAELPSCIAPGDLLVFNDTKVLKARFFGQKASGGKIEVLIERVTGTHTALAQIRASKSPGAGTTLRLADAFDVTVGERVEPFFTLHFPAPCLDLIEQYGRLPLPPYIEHDPDATDETRYQTVYASNPGAVAAPTAGLHFDQPLLEQLDALGVERATLTLHVGAGTFQPVRVDNIAEHKMHSEWYDLPQSLVDKIAATRARGGNVIAVGTTSMRALEAAARSADEAGRPLAATQAETDIFITPGYRFRVVDRLVTNFHLPKSTLLMLVSAFAGVETIRAAYRHAIEERYRFFSYGDAMLLTRRDTPEAPGA.

This sequence belongs to the QueA family. Monomer.

Its subcellular location is the cytoplasm. It catalyses the reaction 7-aminomethyl-7-carbaguanosine(34) in tRNA + S-adenosyl-L-methionine = epoxyqueuosine(34) in tRNA + adenine + L-methionine + 2 H(+). The protein operates within tRNA modification; tRNA-queuosine biosynthesis. In terms of biological role, transfers and isomerizes the ribose moiety from AdoMet to the 7-aminomethyl group of 7-deazaguanine (preQ1-tRNA) to give epoxyqueuosine (oQ-tRNA). This is S-adenosylmethionine:tRNA ribosyltransferase-isomerase from Burkholderia cenocepacia (strain ATCC BAA-245 / DSM 16553 / LMG 16656 / NCTC 13227 / J2315 / CF5610) (Burkholderia cepacia (strain J2315)).